The following is a 415-amino-acid chain: Serine hydroxymethyltransferase (415 aa).

(6S)-5,6,7,8-tetrahydrofolate contacts are provided by residues leucine 117 and 121–123; that span reads GHL. At lysine 226 the chain carries N6-(pyridoxal phosphate)lysine. (6S)-5,6,7,8-tetrahydrofolate is bound at residue glutamate 241.

Belongs to the SHMT family. In terms of assembly, homodimer. The cofactor is pyridoxal 5'-phosphate.

It is found in the cytoplasm. It carries out the reaction (6R)-5,10-methylene-5,6,7,8-tetrahydrofolate + glycine + H2O = (6S)-5,6,7,8-tetrahydrofolate + L-serine. It participates in one-carbon metabolism; tetrahydrofolate interconversion. It functions in the pathway amino-acid biosynthesis; glycine biosynthesis; glycine from L-serine: step 1/1. Functionally, catalyzes the reversible interconversion of serine and glycine with tetrahydrofolate (THF) serving as the one-carbon carrier. This reaction serves as the major source of one-carbon groups required for the biosynthesis of purines, thymidylate, methionine, and other important biomolecules. Also exhibits THF-independent aldolase activity toward beta-hydroxyamino acids, producing glycine and aldehydes, via a retro-aldol mechanism. The sequence is that of Serine hydroxymethyltransferase from Bacillus pumilus (strain SAFR-032).